The sequence spans 126 residues: Histone H2B type 1-P (126 aa).

The segment at 1–36 (MPEPVKSVPAPKKGSKKAVTKAQKKDGKKRKRSRKE) is disordered. Position 2 is an N-acetylproline (Pro2). Position 3 is an ADP-ribosyl glutamic acid (Glu3). At Lys6 the chain carries N6-(2-hydroxyisobutyryl)lysine; alternate. The residue at position 6 (Lys6) is an N6-(beta-hydroxybutyryl)lysine; alternate. Lys6 carries the N6-acetyllysine; alternate modification. N6-butyryllysine; alternate is present on Lys6. Lys6 carries the post-translational modification N6-crotonyllysine; alternate. The residue at position 6 (Lys6) is an N6-lactoyllysine; alternate. Lys6 is covalently cross-linked (Glycyl lysine isopeptide (Lys-Gly) (interchain with G-Cter in SUMO2); alternate). Ser7 carries the ADP-ribosylserine modification. Lys12 bears the N6-(beta-hydroxybutyryl)lysine; alternate mark. N6-acetyllysine; alternate occurs at positions 12 and 13. 2 positions are modified to N6-crotonyllysine; alternate: Lys12 and Lys13. At Lys12 the chain carries N6-lactoyllysine; alternate. At Lys13 the chain carries N6-(2-hydroxyisobutyryl)lysine; alternate. Ser15 carries the post-translational modification Phosphoserine; by STK4/MST1. N6-acetyllysine; alternate is present on residues Lys16, Lys17, Lys21, and Lys24. N6-crotonyllysine; alternate occurs at positions 16, 17, 21, and 24. Residues Lys16, Lys17, Lys21, and Lys24 each carry the N6-lactoyllysine; alternate modification. Lys17 is modified (N6-glutaryllysine; alternate). An N6-(2-hydroxyisobutyryl)lysine; alternate mark is found at Lys21 and Lys24. Position 21 is an N6-(beta-hydroxybutyryl)lysine; alternate (Lys21). Lys21 is modified (N6-butyryllysine; alternate). Residue Lys21 forms a Glycyl lysine isopeptide (Lys-Gly) (interchain with G-Cter in SUMO2); alternate linkage. The residue at position 25 (Lys25) is an N6-(2-hydroxyisobutyryl)lysine. At Lys35 the chain carries N6-(2-hydroxyisobutyryl)lysine; alternate. At Lys35 the chain carries N6-(beta-hydroxybutyryl)lysine; alternate. At Lys35 the chain carries N6-crotonyllysine; alternate. Residue Lys35 is modified to N6-glutaryllysine; alternate. The residue at position 35 (Lys35) is an N6-succinyllysine; alternate. Lys35 is covalently cross-linked (Glycyl lysine isopeptide (Lys-Gly) (interchain with G-Cter in ubiquitin); alternate). A PolyADP-ribosyl glutamic acid modification is found at Glu36. Ser37 bears the Phosphoserine; by AMPK mark. Lys44, Lys47, and Lys58 each carry N6-(2-hydroxyisobutyryl)lysine; alternate. Position 44 is an N6-lactoyllysine; alternate (Lys44). N6-glutaryllysine; alternate is present on residues Lys44 and Lys47. An N6-methyllysine; alternate modification is found at Lys47. Lys58 carries the post-translational modification N6,N6-dimethyllysine; alternate. Arg80 is modified (dimethylated arginine). N6-(2-hydroxyisobutyryl)lysine; alternate is present on Lys86. Residue Lys86 is modified to N6-acetyllysine; alternate. Residue Lys86 is modified to N6-lactoyllysine; alternate. Lys86 is subject to N6,N6,N6-trimethyllysine; alternate. An omega-N-methylarginine mark is found at Arg87 and Arg93. Lys109 carries the post-translational modification N6-(2-hydroxyisobutyryl)lysine; alternate. An N6-(beta-hydroxybutyryl)lysine; alternate modification is found at Lys109. Lys109 bears the N6-lactoyllysine; alternate mark. Lys109 is modified (N6-glutaryllysine; alternate). Residue Lys109 is modified to N6-methyllysine; alternate. O-linked (GlcNAc) serine glycosylation occurs at Ser113. Thr116 bears the Phosphothreonine mark. Residues Lys117 and Lys121 each carry the N6-(2-hydroxyisobutyryl)lysine; alternate modification. Position 117 is an N6-(beta-hydroxybutyryl)lysine; alternate (Lys117). Residues Lys117 and Lys121 each carry the N6-lactoyllysine; alternate modification. Lys117 and Lys121 each carry N6-glutaryllysine; alternate. N6-succinyllysine; alternate is present on residues Lys117 and Lys121. An N6-methylated lysine; alternate modification is found at Lys117. Residue Lys121 forms a Glycyl lysine isopeptide (Lys-Gly) (interchain with G-Cter in ubiquitin); alternate linkage.

This sequence belongs to the histone H2B family. The nucleosome is a histone octamer containing two molecules each of H2A, H2B, H3 and H4 assembled in one H3-H4 heterotetramer and two H2A-H2B heterodimers. The octamer wraps approximately 147 bp of DNA. In terms of processing, monoubiquitination at Lys-35 (H2BK34Ub) by the MSL1/MSL2 dimer is required for histone H3 'Lys-4' (H3K4me) and 'Lys-79' (H3K79me) methylation and transcription activation at specific gene loci, such as HOXA9 and MEIS1 loci. Similarly, monoubiquitination at Lys-121 (H2BK120Ub) by the RNF20/40 complex gives a specific tag for epigenetic transcriptional activation and is also prerequisite for histone H3 'Lys-4' and 'Lys-79' methylation. It also functions cooperatively with the FACT dimer to stimulate elongation by RNA polymerase II. H2BK120Ub also acts as a regulator of mRNA splicing: deubiquitination by USP49 is required for efficient cotranscriptional splicing of a large set of exons. Post-translationally, phosphorylated on Ser-15 (H2BS14ph) by STK4/MST1 during apoptosis; which facilitates apoptotic chromatin condensation. Also phosphorylated on Ser-15 in response to DNA double strand breaks (DSBs), and in correlation with somatic hypermutation and immunoglobulin class-switch recombination. Phosphorylation at Ser-37 (H2BS36ph) by AMPK in response to stress promotes transcription. GlcNAcylation at Ser-113 promotes monoubiquitination of Lys-121. It fluctuates in response to extracellular glucose, and associates with transcribed genes. In terms of processing, ADP-ribosylated by PARP1 or PARP2 on Ser-7 (H2BS6ADPr) in response to DNA damage. H2BS6ADPr promotes recruitment of CHD1L. Mono-ADP-ribosylated on Glu-3 (H2BE2ADPr) by PARP3 in response to single-strand breaks. Poly ADP-ribosylation on Glu-36 (H2BE35ADPr) by PARP1 regulates adipogenesis: it inhibits phosphorylation at Ser-37 (H2BS36ph), thereby blocking expression of pro-adipogenetic genes. Post-translationally, crotonylation (Kcr) is specifically present in male germ cells and marks testis-specific genes in post-meiotic cells, including X-linked genes that escape sex chromosome inactivation in haploid cells. Crotonylation marks active promoters and enhancers and confers resistance to transcriptional repressors. It is also associated with post-meiotically activated genes on autosomes. Hydroxybutyrylation of histones is induced by starvation. In terms of processing, lactylated in macrophages by EP300/P300 by using lactoyl-CoA directly derived from endogenous or exogenous lactate, leading to stimulates gene transcription.

It localises to the nucleus. Its subcellular location is the chromosome. Its function is as follows. Core component of nucleosome. Nucleosomes wrap and compact DNA into chromatin, limiting DNA accessibility to the cellular machineries which require DNA as a template. Histones thereby play a central role in transcription regulation, DNA repair, DNA replication and chromosomal stability. DNA accessibility is regulated via a complex set of post-translational modifications of histones, also called histone code, and nucleosome remodeling. The protein is Histone H2B type 1-P (Hist1h2bp) of Mus musculus (Mouse).